A 495-amino-acid chain; its full sequence is MSAQAAERDLTAIIGLEVHVQLETDTKIFCGCSTDTDDADPNTHTCPVCLGLPGALPTLNEGAVEAAVKLGKAIDADIPERTRFHRKNYFYPDLPKGFQITQYDAPICQDGELEVGTADDRRAIGIERAHLEEDPGSLQHVGGSIEDADYTLVDYNRAGTPLMEIVTRPDFRAAEEVRSFLAKLTSVLEYLGVFDAERDGSLRVDANISMVDSAELAGEGGPSDDVLEAANRTEVKNISSHRAAQKALAYETTRQRNQLERGMAVAQETRHWDEARGVTVSMRSKEEEKDYRYFREADIPPLEVSDWKDEIPIPELPDARRERFRTEYGVGDETASKLTSRKAVADLFEELADEYDAALAATWVADNVLGELNYRDLSLDDVADRDDEFERLVELVAEDEITAKNAEEVVLRTMLDEDRAPDEIVDAEGLGKTSGDAVADAVAEAIAENPDAVADYHDGEGDALNFLVGQVMAKTGGSADPGQVNELLRDELAQA.

This sequence belongs to the GatB/GatE family. GatB subfamily. In terms of assembly, heterotrimer of A, B and C subunits.

It catalyses the reaction L-glutamyl-tRNA(Gln) + L-glutamine + ATP + H2O = L-glutaminyl-tRNA(Gln) + L-glutamate + ADP + phosphate + H(+). It carries out the reaction L-aspartyl-tRNA(Asn) + L-glutamine + ATP + H2O = L-asparaginyl-tRNA(Asn) + L-glutamate + ADP + phosphate + 2 H(+). Its function is as follows. Allows the formation of correctly charged Asn-tRNA(Asn) or Gln-tRNA(Gln) through the transamidation of misacylated Asp-tRNA(Asn) or Glu-tRNA(Gln) in organisms which lack either or both of asparaginyl-tRNA or glutaminyl-tRNA synthetases. The reaction takes place in the presence of glutamine and ATP through an activated phospho-Asp-tRNA(Asn) or phospho-Glu-tRNA(Gln). This Halobacterium salinarum (strain ATCC 700922 / JCM 11081 / NRC-1) (Halobacterium halobium) protein is Aspartyl/glutamyl-tRNA(Asn/Gln) amidotransferase subunit B.